Consider the following 843-residue polypeptide: Toll-like receptor 4 (843 aa).

Positions 1-23 (MMPPTRLAGTLIPAMAFLSCLRP) are cleaved as a signal peptide. The region spanning 24–54 (ESWDPCVQVVPNTTYQCMDLNLYKIPENIPT) is the LRRNT domain. At 24-633 (ESWDPCVQVV…FNNATCQISK (610 aa)) the chain is on the extracellular side. A disulfide bridge links C29 with C40. The N-linked (GlcNAc...) asparagine glycan is linked to N35. LRR repeat units lie at residues 55–76 (STKE…SFSN), 79–100 (ELQV…AYQG), 103–124 (HLST…AFSG), 127–148 (SLQT…PIGH), 151–172 (TLKE…EYFS), 176–197 (NLEH…DLRV), 205–225 (NLSL…AFKE), and 227–247 (KLHK…KSCI). N-linked (GlcNAc...) asparagine glycans are attached at residues N189 and N205. 2 N-linked (GlcNAc...) asparagine glycosylation sites follow: N282 and N295. LRR repeat units follow at residues 353 to 374 (SLKR…VKLP), 375 to 398 (SLEF…ADLK), 401 to 423 (RLKH…MGLE), 424 to 445 (QLEH…PVFL), 449 to 459 (NLRYLDISYTN), 473 to 496 (SLQV…FREM), 498 to 519 (NLTT…AFCL), 522 to 543 (RLRV…PYKP), and 546 to 569 (SLQI…QHFP). A disulfide bond links C391 and C392. Residues N498 and N527 are each glycosylated (N-linked (GlcNAc...) asparagine). A glycan (N-linked (GlcNAc...) asparagine) is linked at N576. Residues 580–631 (NDFACVCEYQSFLQWVKDQRQLLVEVEHLVCAIPLQMRGMPVLGFNNATCQI) enclose the LRRCT domain. 2 disulfide bridges follow: C584–C610 and C586–C629. N-linked (GlcNAc...) asparagine glycosylation occurs at N626. The helical transmembrane segment at 634-654 (TIVGGSVFSILMVSVIAVLVY) threads the bilayer. Over 655–843 (KFYFHLMLLA…SRQHDAETST (189 aa)) the chain is Cytoplasmic. The TIR domain occupies 674 to 817 (SIYDAFVIYS…IFWRRLRKAL (144 aa)). The interval 824–843 (SPAGTADAAESRQHDAETST) is disordered. The segment covering 832-843 (AESRQHDAETST) has biased composition (basic and acidic residues).

It belongs to the Toll-like receptor family. In terms of assembly, belongs to the lipopolysaccharide (LPS) receptor, a multi-protein complex containing at least CD14, LY96 and TLR4. Binding to bacterial LPS leads to homodimerization. Interacts with LY96 via the extracellular domain. Interacts with MYD88 and TIRAP via their respective TIR domains. Interacts with NOX4. Interacts with CNPY3 and HSP90B1; this interaction is required for proper folding in the endoplasmic reticulum. Interacts with MAP3K21; this interaction leads to negative regulation of TLR4 signaling. Interacts with CD36, following CD36 stimulation by oxLDL or amyloid-beta 42, and forms a heterodimer with TLR6. The trimeric complex is internalized and triggers inflammatory response. LYN kinase activity facilitates TLR4-TLR6 heterodimerization and signal initiation. Interacts with TICAM1 in response to LPS in a WDFY1-dependent manner. Interacts with WDFY1 in response to LPS. Interacts with SMPDL3B. Interacts with CEACAM1; upon lipopolysaccharide stimulation, forms a complex including TLR4 and the phosphorylated form of SYK and CEACAM1, which in turn, recruits PTPN6 that dephosphorylates SYK, reducing the production of reactive oxygen species (ROS) and lysosome disruption, which in turn, reduces the activity of the inflammasome. Interacts with RFTN1; the interaction occurs in response to lipopolysaccharide stimulation. Interacts with SCIMP; the interaction occurs in response to lipopolysaccharide stimulation and is enhanced by phosphorylation of SCIMP by LYN. This interaction facilitates the phosphorylation of TLR4 by LYN which elicits a selective cytokine response in macrophages. Interacts with TRAF3IP3. Interacts with TREM1; this interaction enhances TLR4-mediated inflammatory response. Interacts with ZG16B/PAUF. Interacts with CD82; this interaction inhibits TLR4-mediated signaling pathway. Phosphorylated on tyrosine residues by LYN after binding lipopolysaccharide. Post-translationally, ubiquitinated by RNF128 via 'Lys-28'-linked polyubiquitin chains, leading to proteasomal degradation.

It is found in the cell membrane. The protein resides in the early endosome. Its subcellular location is the cell projection. It localises to the ruffle. In terms of biological role, transmembrane receptor that functions as a pattern recognition receptor recognizing pathogen- and damage-associated molecular patterns (PAMPs and DAMPs) to induce innate immune responses via downstream signaling pathways. At the plasma membrane, cooperates with LY96 to mediate the innate immune response to bacterial lipopolysaccharide (LPS). Also involved in LPS-independent inflammatory responses triggered by free fatty acids, such as palmitate, and Ni(2+). Mechanistically, acts via MYD88, TIRAP and TRAF6, leading to NF-kappa-B activation, cytokine secretion and the inflammatory response. Alternatively, CD14-mediated TLR4 internalization via endocytosis is associated with the initiation of a MYD88-independent signaling via the TICAM1-TBK1-IRF3 axis leading to type I interferon production. In addition to the secretion of proinflammatory cytokines, initiates the activation of NLRP3 inflammasome and formation of a positive feedback loop between autophagy and NF-kappa-B signaling cascade. In complex with TLR6, promotes inflammation in monocytes/macrophages by associating with TLR6 and the receptor CD86. Upon ligand binding, such as oxLDL or amyloid-beta 42, the TLR4:TLR6 complex is internalized and triggers inflammatory response, leading to NF-kappa-B-dependent production of CXCL1, CXCL2 and CCL9 cytokines, via MYD88 signaling pathway, and CCL5 cytokine, via TICAM1 signaling pathway. In myeloid dendritic cells, vesicular stomatitis virus glycoprotein G but not LPS promotes the activation of IRF7, leading to type I IFN production in a CD14-dependent manner. The chain is Toll-like receptor 4 (TLR4) from Equus caballus (Horse).